The following is a 537-amino-acid chain: Tyrosine-protein kinase Fyn (537 aa).

G2 carries the N-myristoyl glycine lipid modification. 2 S-palmitoyl cysteine lipidation sites follow: C3 and C6. The residue at position 12 (T12) is a Phosphothreonine; by PKC. Residues 82-143 form the SH3 domain; the sequence is TGVTLFVALY…PSNYVAPVDS (62 aa). The SH2 domain maps to 149 to 246; it reads WYFGKLGRKD…GLCCRLVVPC (98 aa). The Protein kinase domain maps to 271-524; sequence LQLIKRLGNG…YLQAFLEDYF (254 aa). ATP-binding positions include 277–285 and K299; that span reads LGNGQFGEV. D390 serves as the catalytic Proton acceptor. Y420 carries the phosphotyrosine; by autocatalysis modification. Y531 is subject to Phosphotyrosine.

Belongs to the protein kinase superfamily. Tyr protein kinase family. SRC subfamily. Associates through its SH3 domain, to the p85 subunit of phosphatidylinositol 3-kinase. Mn(2+) serves as cofactor.

The catalysed reaction is L-tyrosyl-[protein] + ATP = O-phospho-L-tyrosyl-[protein] + ADP + H(+). Inhibited by phosphorylation of Tyr-531 by leukocyte common antigen and activated by dephosphorylation of this site. Tyrosine-protein kinase implicated in the control of cell growth. Plays a role in the regulation of intracellular calcium levels. Required in brain development and mature brain function with important roles in the regulation of axon growth, axon guidance, and neurite extension. The sequence is that of Tyrosine-protein kinase Fyn (fyn) from Xiphophorus hellerii (Green swordtail).